The primary structure comprises 138 residues: Translation initiation factor 2 subunit beta (138 aa).

The protein belongs to the eIF-2-beta/eIF-5 family. As to quaternary structure, heterotrimer composed of an alpha, a beta and a gamma chain.

Functionally, eIF-2 functions in the early steps of protein synthesis by forming a ternary complex with GTP and initiator tRNA. This is Translation initiation factor 2 subunit beta from Methanococcus vannielii (strain ATCC 35089 / DSM 1224 / JCM 13029 / OCM 148 / SB).